Reading from the N-terminus, the 579-residue chain is Isocitrate dehydrogenase kinase/phosphatase (579 aa).

Residues 324–330 and K345 contribute to the ATP site; that span reads ADGTPGM. Residue D380 is part of the active site.

This sequence belongs to the AceK family.

It is found in the cytoplasm. The catalysed reaction is L-seryl-[isocitrate dehydrogenase] + ATP = O-phospho-L-seryl-[isocitrate dehydrogenase] + ADP + H(+). Bifunctional enzyme which can phosphorylate or dephosphorylate isocitrate dehydrogenase (IDH) on a specific serine residue. This is a regulatory mechanism which enables bacteria to bypass the Krebs cycle via the glyoxylate shunt in response to the source of carbon. When bacteria are grown on glucose, IDH is fully active and unphosphorylated, but when grown on acetate or ethanol, the activity of IDH declines drastically concomitant with its phosphorylation. This chain is Isocitrate dehydrogenase kinase/phosphatase, found in Xanthomonas axonopodis pv. citri (strain 306).